The primary structure comprises 181 residues: ATP-dependent protease subunit HslV (181 aa).

The active site involves Thr6. Na(+) contacts are provided by Gly162, Cys165, and Thr168.

This sequence belongs to the peptidase T1B family. HslV subfamily. A double ring-shaped homohexamer of HslV is capped on each side by a ring-shaped HslU homohexamer. The assembly of the HslU/HslV complex is dependent on binding of ATP.

It localises to the cytoplasm. The enzyme catalyses ATP-dependent cleavage of peptide bonds with broad specificity.. Allosterically activated by HslU binding. In terms of biological role, protease subunit of a proteasome-like degradation complex believed to be a general protein degrading machinery. This is ATP-dependent protease subunit HslV from Nitratidesulfovibrio vulgaris (strain ATCC 29579 / DSM 644 / CCUG 34227 / NCIMB 8303 / VKM B-1760 / Hildenborough) (Desulfovibrio vulgaris).